The following is a 393-amino-acid chain: Succinate--CoA ligase [ADP-forming] subunit beta (393 aa).

The ATP-grasp domain occupies 9 to 242 (KELFAKHGVP…RAATDPLEWK (234 aa)). ATP-binding positions include Lys45, 52 to 54 (GRG), Ser94, and Glu99. The Mg(2+) site is built by Asn191 and Asp211. Substrate contacts are provided by residues Asn262 and 324–326 (GIT).

This sequence belongs to the succinate/malate CoA ligase beta subunit family. As to quaternary structure, heterotetramer of two alpha and two beta subunits. Requires Mg(2+) as cofactor.

The catalysed reaction is succinate + ATP + CoA = succinyl-CoA + ADP + phosphate. The enzyme catalyses GTP + succinate + CoA = succinyl-CoA + GDP + phosphate. Its pathway is carbohydrate metabolism; tricarboxylic acid cycle; succinate from succinyl-CoA (ligase route): step 1/1. Succinyl-CoA synthetase functions in the citric acid cycle (TCA), coupling the hydrolysis of succinyl-CoA to the synthesis of either ATP or GTP and thus represents the only step of substrate-level phosphorylation in the TCA. The beta subunit provides nucleotide specificity of the enzyme and binds the substrate succinate, while the binding sites for coenzyme A and phosphate are found in the alpha subunit. The sequence is that of Succinate--CoA ligase [ADP-forming] subunit beta from Mycobacterium leprae (strain Br4923).